The sequence spans 123 residues: UPF0426 protein At1g28150, chloroplastic (123 aa).

The transit peptide at 1–26 (MGFVLICTCPPSSGVVVSQLHHHQFS) directs the protein to the chloroplast. Residues 97–123 (SGITEEEVDADGVVSNDEDSPQQIEIE) form a disordered region. The segment covering 100-123 (TEEEVDADGVVSNDEDSPQQIEIE) has biased composition (acidic residues).

Belongs to the UPF0426 family.

The protein localises to the plastid. The protein resides in the chloroplast. Its subcellular location is the plastoglobule. This chain is UPF0426 protein At1g28150, chloroplastic, found in Arabidopsis thaliana (Mouse-ear cress).